A 651-amino-acid chain; its full sequence is Mitogen-activated protein kinase kinase kinase 3 (651 aa).

The Protein kinase domain maps to 68–330; the sequence is WRKGELIGCG…ATELLQHPFV (263 aa). Residues 74–82 and K97 contribute to the ATP site; that span reads IGCGAFGRV. A coiled-coil region spans residues 105–130; sequence SASKEKTQGHIRELEEEVQLLKNLSH. Glycyl lysine isopeptide (Lys-Gly) (interchain with G-Cter in ubiquitin) cross-links involve residues K108 and K110. The active-site Proton acceptor is D196. The interval 573-608 is disordered; sequence MPSPLKSSKRTLNTSRVMQSGTEPTQVNESTKKGVN. Over residues 582–608 the composition is skewed to polar residues; it reads RTLNTSRVMQSGTEPTQVNESTKKGVN. Positions 618 to 641 form a coiled coil; sequence RKWEEELYEELERHRENLRHAGAG.

It belongs to the protein kinase superfamily. STE Ser/Thr protein kinase family. MAP kinase kinase kinase subfamily. In terms of assembly, interacts with NACK2 and MKK6. In terms of tissue distribution, expressed in roots and flowers.

Its subcellular location is the cytoplasm. It is found in the cytoskeleton. It catalyses the reaction L-seryl-[protein] + ATP = O-phospho-L-seryl-[protein] + ADP + H(+). It carries out the reaction L-threonyl-[protein] + ATP = O-phospho-L-threonyl-[protein] + ADP + H(+). Functionally, involved in cortical microtubules organization and stabilization by regulating the phosphorylation state of microtubule-associated proteins such as MAP65-1. This is Mitogen-activated protein kinase kinase kinase 3 (ANP3) from Arabidopsis thaliana (Mouse-ear cress).